The sequence spans 71 residues: Vitellogenin-A1 (71 aa).

Positions 1–15 are cleaved as a signal peptide; it reads MRGIILALLLAIAGS. The Vitellogenin domain occupies 24–71; it reads FSESKTSVYNYEAVILNGFPESGLSRAGIKINCKVEISAYAQRSYFLK.

As to expression, produced by the liver, secreted into the blood and then sequestered by receptor mediated endocytosis into growing oocytes, where it is generally cleaved, giving rise to the respective yolk components.

Its function is as follows. Precursor of the major egg-yolk proteins that are sources of nutrients during early development of oviparous organisms. This Xenopus laevis (African clawed frog) protein is Vitellogenin-A1.